Here is a 128-residue protein sequence, read N- to C-terminus: EPIDERMAL PATTERNING FACTOR-like protein 2 (128 aa).

Residues 1–28 (MVWSSNMSSFLLILLILNSTHFSLMANG) form the signal peptide. Disulfide bonds link Cys60–Cys119, Cys65–Cys71, and Cys68–Cys121. Residues 79 to 90 (NPQTKLHSPLTT) show a composition bias toward polar residues. The disordered stretch occupies residues 79–100 (NPQTKLHSPLTTSSSSSSETIH).

It belongs to the plant cysteine rich small secretory peptide family. Epidermal patterning factor subfamily.

It localises to the secreted. In terms of biological role, controls stomatal patterning. The chain is EPIDERMAL PATTERNING FACTOR-like protein 2 from Arabidopsis thaliana (Mouse-ear cress).